Consider the following 200-residue polypeptide: Peptidyl-tRNA hydrolase (200 aa).

Tyr-15 is a binding site for tRNA. Catalysis depends on His-20, which acts as the Proton acceptor. Positions 66, 68, and 114 each coordinate tRNA.

It belongs to the PTH family. In terms of assembly, monomer.

It localises to the cytoplasm. The enzyme catalyses an N-acyl-L-alpha-aminoacyl-tRNA + H2O = an N-acyl-L-amino acid + a tRNA + H(+). Hydrolyzes ribosome-free peptidyl-tRNAs (with 1 or more amino acids incorporated), which drop off the ribosome during protein synthesis, or as a result of ribosome stalling. Its function is as follows. Catalyzes the release of premature peptidyl moieties from peptidyl-tRNA molecules trapped in stalled 50S ribosomal subunits, and thus maintains levels of free tRNAs and 50S ribosomes. This is Peptidyl-tRNA hydrolase from Paraburkholderia xenovorans (strain LB400).